Reading from the N-terminus, the 231-residue chain is MNRLMIVSLLGIATVLGGCVNPPPKPNDPYYAPVLPRTPLPAAQNNGAIYQAGFEQNLYDDRKAFRVGDIITITLNEKTQASKKANSDIQKDSKTKMGLTSLFGSGMTTNNPIGGGDLSLSAEYGGSRDAKGDSQAGQSNSLTGSITVTVAEVLPNGILSVRGEKWMTLNTGNELVRIAGLVRADDIATDNTVPSTRVADARITYSGTGAFADASQPGWLDRFFLSPLWPF.

The first 18 residues, 1 to 18, serve as a signal peptide directing secretion; sequence MNRLMIVSLLGIATVLGG. Cys-19 carries N-palmitoyl cysteine lipidation. A lipid anchor (S-diacylglycerol cysteine) is attached at Cys-19. The tract at residues 118–141 is disordered; the sequence is LSLSAEYGGSRDAKGDSQAGQSNS.

Belongs to the FlgH family. In terms of assembly, the basal body constitutes a major portion of the flagellar organelle and consists of four rings (L,P,S, and M) mounted on a central rod.

Its subcellular location is the cell outer membrane. It is found in the bacterial flagellum basal body. Functionally, assembles around the rod to form the L-ring and probably protects the motor/basal body from shearing forces during rotation. The sequence is that of Flagellar L-ring protein from Pseudomonas paraeruginosa (strain DSM 24068 / PA7) (Pseudomonas aeruginosa (strain PA7)).